We begin with the raw amino-acid sequence, 1188 residues long: F-box only protein 38 (1188 aa).

One can recognise an F-box domain in the interval 30 to 75 (MNQLSHEVLCHIFRYLPLQDIMCMECLSRKLKEAVTLYLRVVRVVD). The interval 59 to 119 (KLKEAVTLYL…LHPRYLERRR (61 aa)) is interaction with KLF7. 3 short sequence motifs (nuclear export signal) span residues 194–201 (LHLVGVNV), 307–316 (LEVDLGYLII), and 451–460 (LLPSLEFISL). The segment at 487 to 526 (ALVSNQNSNNDDNNAQNNNANIHDNNHHHPDDSDEENDFR) is disordered. The segment covering 491–509 (NQNSNNDDNNAQNNNANIH) has biased composition (low complexity). A Phosphothreonine modification is found at Thr591. 3 positions are modified to phosphoserine: Ser598, Ser600, and Ser606. Disordered regions lie at residues 620–666 (RRYS…FPLE), 685–766 (MKAA…MEEG), and 787–909 (RTSR…STSD). 2 stretches are compositionally biased toward basic and acidic residues: residues 621 to 630 (RYSEREEKTG) and 685 to 699 (MKAARDIPEKKKNKD). The span at 703–740 (SCSSTTASTVGNSSSHNTASQSPDFVRTVNSGGSSEPS) shows a compositional bias: polar residues. Phosphoserine occurs at positions 736 and 740. Residues 787 to 798 (RTSRCSDEERPS) are compositionally biased toward basic and acidic residues. Residues 849–861 (SSQPESCDVQSNE) show a composition bias toward polar residues. Residues 889–900 (TKPRHAMKRKRT) are compositionally biased toward basic residues. The Nuclear localization signal motif lies at 896–899 (KRKR).

In terms of assembly, part of the SCF (SKP1-CUL1-F-box) E3 ubiquitin-protein ligase complex SCF(FBXO38) composed of CUL1, SKP1, RBX1 and FBXO38. Interacts with KLF7. Interacts with PDCD1/PD-1.

Its subcellular location is the cytoplasm. The protein localises to the cytosol. It localises to the nucleus. It participates in protein modification; protein ubiquitination. Substrate recognition component of a SCF (SKP1-CUL1-F-box protein) E3 ubiquitin-protein ligase complex which mediates the ubiquitination and subsequent proteasomal degradation of PDCD1/PD-1, thereby regulating T-cells-mediated immunity. Required for anti-tumor activity of T-cells by promoting the degradation of PDCD1/PD-1; the PDCD1-mediated inhibitory pathway being exploited by tumors to attenuate anti-tumor immunity and facilitate tumor survival. May indirectly stimulate the activity of transcription factor KLF7, a regulator of neuronal differentiation, without promoting KLF7 ubiquitination. This chain is F-box only protein 38, found in Homo sapiens (Human).